The following is a 489-amino-acid chain: Ribulose bisphosphate carboxylase large chain (489 aa).

Substrate is bound by residues Asn-128 and Thr-178. Lys-180 (proton acceptor) is an active-site residue. Lys-182 provides a ligand contact to substrate. Residues Lys-206, Asp-208, and Glu-209 each coordinate Mg(2+). Lys-206 is modified (N6-carboxylysine). His-298 serves as the catalytic Proton acceptor. Substrate is bound by residues Arg-299, His-331, and Ser-383.

It belongs to the RuBisCO large chain family. Type I subfamily. Heterohexadecamer of 8 large chains and 8 small chains. It depends on Mg(2+) as a cofactor.

It carries out the reaction 2 (2R)-3-phosphoglycerate + 2 H(+) = D-ribulose 1,5-bisphosphate + CO2 + H2O. It catalyses the reaction D-ribulose 1,5-bisphosphate + O2 = 2-phosphoglycolate + (2R)-3-phosphoglycerate + 2 H(+). Functionally, ruBisCO catalyzes two reactions: the carboxylation of D-ribulose 1,5-bisphosphate, the primary event in carbon dioxide fixation, as well as the oxidative fragmentation of the pentose substrate. Both reactions occur simultaneously and in competition at the same active site. The protein is Ribulose bisphosphate carboxylase large chain of Nitrosospira sp. (strain 40KI).